Consider the following 351-residue polypeptide: Methionine import ATP-binding protein MetN (351 aa).

In terms of domain architecture, ABC transporter spans 4 to 249 (VQLDHVSVTF…PKAELTQKFV (246 aa)). 41–48 (GFSGAGKS) provides a ligand contact to ATP.

It belongs to the ABC transporter superfamily. Methionine importer (TC 3.A.1.24) family. In terms of assembly, the complex is composed of two ATP-binding proteins (MetN), two transmembrane proteins (MetI) and a solute-binding protein (MetQ).

It localises to the cell membrane. The catalysed reaction is L-methionine(out) + ATP + H2O = L-methionine(in) + ADP + phosphate + H(+). It catalyses the reaction D-methionine(out) + ATP + H2O = D-methionine(in) + ADP + phosphate + H(+). Its function is as follows. Part of the ABC transporter complex MetNIQ involved in methionine import. Responsible for energy coupling to the transport system. The polypeptide is Methionine import ATP-binding protein MetN (Lactobacillus delbrueckii subsp. bulgaricus (strain ATCC 11842 / DSM 20081 / BCRC 10696 / JCM 1002 / NBRC 13953 / NCIMB 11778 / NCTC 12712 / WDCM 00102 / Lb 14)).